Reading from the N-terminus, the 417-residue chain is uncharacterized protein (417 aa).

It to M.tuberculosis Rv2067c.

This is an uncharacterized protein from Synechococcus sp. (strain ATCC 27144 / PCC 6301 / SAUG 1402/1) (Anacystis nidulans).